The following is an 80-amino-acid chain: Cell division protein ZapB (80 aa).

Residues 3-80 (FEVFEKLEAK…ALLGKMEDVQ (78 aa)) are a coiled coil.

The protein belongs to the ZapB family. In terms of assembly, homodimer. The ends of the coiled-coil dimer bind to each other, forming polymers. Interacts with FtsZ.

Its subcellular location is the cytoplasm. Non-essential, abundant cell division factor that is required for proper Z-ring formation. It is recruited early to the divisome by direct interaction with FtsZ, stimulating Z-ring assembly and thereby promoting cell division earlier in the cell cycle. Its recruitment to the Z-ring requires functional FtsA or ZipA. The chain is Cell division protein ZapB from Photorhabdus laumondii subsp. laumondii (strain DSM 15139 / CIP 105565 / TT01) (Photorhabdus luminescens subsp. laumondii).